The following is a 272-amino-acid chain: Putative pyruvate, phosphate dikinase regulatory protein (272 aa).

147-154 lines the ADP pocket; it reads GLSRTSKT.

The protein belongs to the pyruvate, phosphate/water dikinase regulatory protein family. PDRP subfamily.

It catalyses the reaction N(tele)-phospho-L-histidyl/L-threonyl-[pyruvate, phosphate dikinase] + ADP = N(tele)-phospho-L-histidyl/O-phospho-L-threonyl-[pyruvate, phosphate dikinase] + AMP + H(+). The catalysed reaction is N(tele)-phospho-L-histidyl/O-phospho-L-threonyl-[pyruvate, phosphate dikinase] + phosphate + H(+) = N(tele)-phospho-L-histidyl/L-threonyl-[pyruvate, phosphate dikinase] + diphosphate. In terms of biological role, bifunctional serine/threonine kinase and phosphorylase involved in the regulation of the pyruvate, phosphate dikinase (PPDK) by catalyzing its phosphorylation/dephosphorylation. The chain is Putative pyruvate, phosphate dikinase regulatory protein from Clostridium botulinum (strain Alaska E43 / Type E3).